Reading from the N-terminus, the 122-residue chain is Large ribosomal subunit protein uL14 (122 aa).

It belongs to the universal ribosomal protein uL14 family. In terms of assembly, part of the 50S ribosomal subunit. Forms a cluster with proteins L3 and L19. In the 70S ribosome, L14 and L19 interact and together make contacts with the 16S rRNA in bridges B5 and B8.

In terms of biological role, binds to 23S rRNA. Forms part of two intersubunit bridges in the 70S ribosome. The protein is Large ribosomal subunit protein uL14 of Campylobacter lari (strain RM2100 / D67 / ATCC BAA-1060).